A 462-amino-acid polypeptide reads, in one-letter code: A-type ATP synthase subunit B (462 aa).

The protein belongs to the ATPase alpha/beta chains family. In terms of assembly, has multiple subunits with at least A(3), B(3), C, D, E, F, H, I and proteolipid K(x).

It is found in the cell membrane. In terms of biological role, component of the A-type ATP synthase that produces ATP from ADP in the presence of a proton gradient across the membrane. The B chain is a regulatory subunit. This is A-type ATP synthase subunit B from Methanococcus vannielii (strain ATCC 35089 / DSM 1224 / JCM 13029 / OCM 148 / SB).